The sequence spans 66 residues: Large ribosomal subunit protein bL33c (66 aa).

The protein belongs to the bacterial ribosomal protein bL33 family.

Its subcellular location is the plastid. It localises to the chloroplast. This Arabidopsis thaliana (Mouse-ear cress) protein is Large ribosomal subunit protein bL33c (rpl33).